Here is a 1089-residue protein sequence, read N- to C-terminus: MCDVLMQPVRTPRPSTNLRSKPLRPTGDGGVFPRLGRLIVRRPWVVIAFWVALAGLLAPTVPSLDAISQRHPVAILPSDAPVLVSTRQMTAAFREAGLQSVAVVVLSDAKGLGAADERSYKELVDALRRDTRDVVMLQDFVTTPPLRELMTSKDNQAWILPVGLPGDLGSTQSKQAYARVADIVEHQVAGSTLTANLTGPAATVADLNLTGQRDRSRIEFAITILLLVILLIIYGNPITMVLPLITIGMSVVVAQRLVAIAGLAGLGIANQSIIFMSGMMVGAGTDYAVFLISRYHDYLRQGADSDQAVKKALTSIGKVIAASAATVAITFLGMVFTQLGILKTVGPMLGISVAVVFFAAVTLLPALMVLTGRRGWIAPRRDLTRRFWRSSGVHIVRRPKTHLLASALVLVILAGCAGLARYNYDDRKTLPASVESSIGYAALDKHFPSNLIIPEYLFIQSSTDLRTPKALADLEQMVQRVSQVPGVAMVRGITRPAGRSLEQARTSWQAGEVGSKLDEGSKQIAVHTGDIDKLAGGANLMASKLGDVRAQVNRAISTVGGLIDALAYLQDLLGGNRVLGELEGAEKLIGSMRALGDTIDADASFVANNTEWASPVLGALDSSPMCTADPACASARTELQRLVTARDDGTLAKISELARQLQATRAVQTLAATVSGLRGALATVIRAMGSLGMSSPGGVRSKINLVNKGVNDLADGSRQLAEGVQLLVDQVKKMGFGLGEASAFLLAMKDTATTPAMAGFYIPPELLSYATGESVKAETMPSEYRDLLGGLNVDQLKKVAAAFISPDGHSIRYLIQTDLNPFSTAAMDQIDAITAAARGAQPNTALADAKVSVVGLPVVLKDTRDYSDHDLRLIIAMTVCIVLLILIVLLRAIVAPLYLIGSVIVSYLAALGIGVIVFQFLLGQEMHWSIPGLTFVILVAVGADYNMLLISRLREEAVLGVRSGVIRTVASTGGVITAAGLIMAASMYGLVFASLGSVVQGAFVLGTGLLLDTFLVRTVTVPAIAVLVGQANWWLPSSWRPATWWPLGRRRGRAQRTKRKPLLPKEEEEQSPPDDDDLIGLWLHDGLRL.

Residues 1 to 26 (MCDVLMQPVRTPRPSTNLRSKPLRPT) are disordered. The next 12 membrane-spanning stretches (helical) occupy residues 44–64 (WVVIAFWVALAGLLAPTVPSL), 222–242 (ITILLLVILLIIYGNPITMVL), 257–277 (LVAIAGLAGLGIANQSIIFMS), 316–336 (IGKVIAASAATVAITFLGMVF), 349–369 (LGISVAVVFFAAVTLLPALMV), 400–420 (KTHLLASALVLVILAGCAGLA), 555–575 (AISTVGGLIDALAYLQDLLGG), 874–894 (IIAMTVCIVLLILIVLLRAIV), 898–918 (YLIGSVIVSYLAALGIGVIVF), 930–950 (IPGLTFVILVAVGADYNMLLI), 973–993 (GGVITAAGLIMAASMYGLVFA), and 996–1016 (GSVVQGAFVLGTGLLLDTFLV). Positions 1056 to 1078 (RTKRKPLLPKEEEEQSPPDDDDL) are disordered. Residues 1066–1078 (EEEEQSPPDDDDL) show a composition bias toward acidic residues.

The protein belongs to the resistance-nodulation-cell division (RND) (TC 2.A.6) family. MmpL subfamily.

Its subcellular location is the cell membrane. This Mycobacterium tuberculosis (strain ATCC 25177 / H37Ra) protein is Probable transport protein MmpL8 (mmpL8).